The chain runs to 881 residues: Alanine--tRNA ligase (881 aa).

Zn(2+) contacts are provided by His-566, His-570, Cys-668, and His-672.

This sequence belongs to the class-II aminoacyl-tRNA synthetase family. It depends on Zn(2+) as a cofactor.

The protein resides in the cytoplasm. It catalyses the reaction tRNA(Ala) + L-alanine + ATP = L-alanyl-tRNA(Ala) + AMP + diphosphate. In terms of biological role, catalyzes the attachment of alanine to tRNA(Ala) in a two-step reaction: alanine is first activated by ATP to form Ala-AMP and then transferred to the acceptor end of tRNA(Ala). Also edits incorrectly charged Ser-tRNA(Ala) and Gly-tRNA(Ala) via its editing domain. This is Alanine--tRNA ligase from Frankia casuarinae (strain DSM 45818 / CECT 9043 / HFP020203 / CcI3).